Here is a 182-residue protein sequence, read N- to C-terminus: Pentatricopeptide repeat-containing protein At2g01360 (182 aa).

3 PPR repeats span residues 30–64 (EKSAYLALAGNFLRSNELSKVIDVVKEMVKSQHSL), 65–95 (GVYHGAMLIHMLGFGRRPSLAAEALDLLPDD), and 98–132 (GLSAYTALMDVYISAGSPEKAMKILGEMREREIMP).

The protein belongs to the PPR family. P subfamily.

In Arabidopsis thaliana (Mouse-ear cress), this protein is Pentatricopeptide repeat-containing protein At2g01360.